The chain runs to 393 residues: MRIGIVGAGLGGLLAGALLSKNHEVVVFEKLPFLGGRFTNLKYEGFQLTTGALHMIPHGNDGYLAQALRKAGANVKIINSKPDGTFLINGKEYLYKELFSLLGFKEKAKAFKLATKLKLGKVDKNISFGEFLEEIDLALKVGNAFTGWALSLTAYETPMSEIIEIAKNYHKFGGPGIPIGGCKAVTDELSRIIKKNNGKIIKEYEVKRIEIDEKAYIDDYEFDVVISNISPIETQKICNIKFLKSKPKPSKGIKISIATKEGIIKHGGVLFTPECERINGLNQVTNVDKSLAPEGWHLVMTHQTQLTNNVKKEIDLGLEDIENLFKGKDYKILHIQSYRDDWPVNHASNGTDIDNIVNDRFYLVGDGAKGRGGIEVEGIAMGVLKVVNYINSL.

This is an uncharacterized protein from Methanocaldococcus jannaschii (strain ATCC 43067 / DSM 2661 / JAL-1 / JCM 10045 / NBRC 100440) (Methanococcus jannaschii).